A 433-amino-acid chain; its full sequence is MPDYLGADQRKTKEDEKDDKPIRALDEGDIALLKTYGQSTYSRQIKQVEDDIQQLLKKINELTGIKESDTGLAPPALWDLAADKQTLQSEQPLQVARCTKIINADSEDPKYIINVKQFAKFVVDLSDQVAPTDIEEGMRVGVDRNKYQIHIPLPPKIDPTVTMMQVEEKPDVTYSDVGGCKEQIEKLREVVETPLLHPERFVNLGIEPPKGVLLFGPPGTGKTLCARAVANRTDACFIPVIGSELVQKYVGEGARMVRELFEMARTKKACLIFFDEIDAIGGARFDDGAGGDNEVQRTMLELINQLDGFDPRGNIKVLMATNRPDTLDPALMRPGRLDRKIEFSLPDLEGRTHIFKIHARSMSVERDIRFELLARLCPNSTGAEIRSVCTEAGMFAIRARRKIATEKDFLEAVNKVIKSYAKFSATPRYMTYN.

The disordered stretch occupies residues 1-22 (MPDYLGADQRKTKEDEKDDKPI). Residues 8-22 (DQRKTKEDEKDDKPI) show a composition bias toward basic and acidic residues. K116 is modified (N6-acetyllysine). 216-223 (GPPGTGKT) lines the ATP pocket. K422 carries the post-translational modification N6-acetyllysine.

The protein belongs to the AAA ATPase family. Component of the 19S proteasome regulatory particle complex. The 26S proteasome consists of a 20S core particle (CP) and two 19S regulatory subunits (RP). The regulatory particle is made of a lid composed of 9 subunits, a base containing 6 ATPases including PSMC2 and few additional components. Interacts with NDC80 and SQSTM1. Interacts with PAAF1. Interacts with TRIM5. In terms of processing, monoubiquitinated by RNF181. Post-translationally, phosphorylated. Dephosphorylated by UBLCP1 which impairs PSMC2 ATPase activity and disrupts 26S proteasome assembly.

The protein resides in the cytoplasm. Its function is as follows. Component of the 26S proteasome, a multiprotein complex involved in the ATP-dependent degradation of ubiquitinated proteins. This complex plays a key role in the maintenance of protein homeostasis by removing misfolded or damaged proteins, which could impair cellular functions, and by removing proteins whose functions are no longer required. Therefore, the proteasome participates in numerous cellular processes, including cell cycle progression, apoptosis, or DNA damage repair. PSMC2 belongs to the heterohexameric ring of AAA (ATPases associated with diverse cellular activities) proteins that unfolds ubiquitinated target proteins that are concurrently translocated into a proteolytic chamber and degraded into peptides. This Rattus norvegicus (Rat) protein is 26S proteasome regulatory subunit 7 (Psmc2).